A 244-amino-acid polypeptide reads, in one-letter code: uncharacterized protein (244 aa).

This sequence belongs to the MtxX family.

This is an uncharacterized protein from Methanocaldococcus jannaschii (strain ATCC 43067 / DSM 2661 / JAL-1 / JCM 10045 / NBRC 100440) (Methanococcus jannaschii).